We begin with the raw amino-acid sequence, 537 residues long: Chaperonin GroEL (537 aa).

ATP is bound by residues 29–32 (TLGP), 86–90 (DGTTT), Gly-413, and Asp-492.

This sequence belongs to the chaperonin (HSP60) family. As to quaternary structure, forms a cylinder of 14 subunits composed of two heptameric rings stacked back-to-back. Interacts with the co-chaperonin GroES.

It is found in the cytoplasm. It catalyses the reaction ATP + H2O + a folded polypeptide = ADP + phosphate + an unfolded polypeptide.. In terms of biological role, together with its co-chaperonin GroES, plays an essential role in assisting protein folding. The GroEL-GroES system forms a nano-cage that allows encapsulation of the non-native substrate proteins and provides a physical environment optimized to promote and accelerate protein folding. The sequence is that of Chaperonin GroEL from Dehalococcoides mccartyi (strain CBDB1).